A 680-amino-acid polypeptide reads, in one-letter code: Pilus tip adhesin Cpa (680 aa).

A cross-link (isoglutamyl cysteine thioester (Cys-Gln)) is located at residues 62-211 (CFNLTKHFPS…IFQSSDKTFQ (150 aa)). The disordered stretch occupies residues 217–236 (EYVPDTPPKPGEEPPAKTEK). A compositionally biased stretch (basic and acidic residues) spans 226 to 236 (PGEEPPAKTEK). The segment at residues 243–546 (KYAEGDYSKL…ELIDVISMED (304 aa)) is a cross-link (isoaspartyl lysine isopeptide (Lys-Asp)). In terms of domain architecture, CNA-B spans 253 to 311 (LEGATLKLAQIEGSGFQEKIFDSNKSGEKVELPNGTYVLSELKPPQGYGVATPITFKVA). Residues 374-526 (CFNADLHSPP…FFVPNSSRYQ (153 aa)) constitute a cross-link (isoglutamyl cysteine thioester (Cys-Gln)). The isoaspartyl lysine isopeptide (Lys-Asn) cross-link spans 562 to 667 (KTVTGTIADK…KEDETVAFEN (106 aa)). The short motif at 672 to 676 (VPPTG) is the VPPTG sorting signal element. Threonine 675 is covalently cross-linked (Threonyl lysine isopeptide (Thr-Lys) (interchain with K-? in major pilin subunit)). The propeptide at 676 to 680 (GLTTD) is removed by sortase.

As to quaternary structure, monomer. Proteolytically processed and assembled in pili through a transpeptidation reaction catalyzed by a sortase, which leads to a covalent link between Cpa and a major pilin subunit.

It is found in the fimbrium. Functionally, component of the pilus tip. Can bind covalently, via its two reactive thioester bonds, to molecular targets from host cell surface and can thus mediate adhesion of the streptococcal pili to host cells. Lysine side chains or a carbohydrate with a free amine group might be candidates for Cpa binding. In vitro, can covalently bind to spermidine, but it is unlikely that spermidine is the natural target of Cpa. The sequence is that of Pilus tip adhesin Cpa (cpa) from Streptococcus pyogenes.